Consider the following 770-residue polypeptide: Low-density lipoprotein receptor-related protein 3 (770 aa).

The N-terminal stretch at 1-36 (MEKRAAAGLEGAPGARAQLAVVCLVNIFLTGRLSSA) is a signal peptide. Over 37–496 (VPALAACSGK…HGCLAAVPRK (460 aa)) the chain is Extracellular. 9 disulfides stabilise this stretch: C43–C72, C99–C120, C166–C178, C173–C191, C185–C200, C212–C227, C219–C240, C234–C249, and C254–C282. Residues 43–159 (CSGKLEQHTE…QGFRLSYIRG (117 aa)) form the CUB 1 domain. N71 carries N-linked (GlcNAc...) asparagine glycosylation. LDL-receptor class A domains follow at residues 165-201 (SCQA…GNCS) and 211-250 (LCPG…AGCP). Residue N199 is glycosylated (N-linked (GlcNAc...) asparagine). Residues 254 to 365 (CGRRLGSFYG…HGFNATYQVK (112 aa)) enclose the CUB 2 domain. N-linked (GlcNAc...) asparagine glycosylation occurs at N359. LDL-receptor class A domains follow at residues 415–453 (ACPP…KNCF) and 454–490 (SCQP…HGCL). 6 disulfide bridges follow: C416–C430, C423–C443, C437–C452, C455–C467, C462–C480, and C474–C489. A helical membrane pass occupies residues 497–517 (VITAALIGSLVCGLLLVIALG). Residues 518–770 (CAFKLYSLRT…ASDDEALLVC (253 aa)) lie on the Cytoplasmic side of the membrane. The disordered stretch occupies residues 635 to 770 (LGDGFLQPAP…ASDDEALLVC (136 aa)). The segment covering 689 to 707 (RDPECRPVDKDRKVCREPL) has biased composition (basic and acidic residues). Polar residues predominate over residues 729–738 (QVSTASSTLG). The segment covering 761–770 (ASDDEALLVC) has biased composition (acidic residues).

The protein belongs to the LDLR family. Binds GGA1 and GGA2. Widely expressed. Highly expressed in skeletal muscle and ovary. Expressed at intermediate level in heart, brain, liver, pancreas, prostate and small intestine. Weakly expressed in testis, colon and leukocyte.

It is found in the membrane. It localises to the coated pit. In terms of biological role, probable receptor, which may be involved in the internalization of lipophilic molecules and/or signal transduction. Its precise role is however unclear, since it does not bind to very low density lipoprotein (VLDL) or to LRPAP1 in vitro. The protein is Low-density lipoprotein receptor-related protein 3 (LRP3) of Homo sapiens (Human).